We begin with the raw amino-acid sequence, 236 residues long: Ribosome maturation protein SDO1 homolog (236 aa).

This sequence belongs to the SDO1/SBDS family. As to quaternary structure, crystallized in association with 70S ribosomes.

The protein is Ribosome maturation protein SDO1 homolog of Thermococcus kodakarensis (strain ATCC BAA-918 / JCM 12380 / KOD1) (Pyrococcus kodakaraensis (strain KOD1)).